The primary structure comprises 428 residues: RF4 protein (428 aa).

Residues Asn8, Asn205, and Asn344 are each glycosylated (N-linked (GlcNAc...) asparagine).

Its function is as follows. Not known. This chain is RF4 protein (RF4), found in Kluyveromyces lactis (strain ATCC 8585 / CBS 2359 / DSM 70799 / NBRC 1267 / NRRL Y-1140 / WM37) (Yeast).